The primary structure comprises 617 residues: D-glucuronyl C5-epimerase (617 aa).

Topologically, residues 1 to 11 are cytoplasmic; sequence MRCLAARVNYK. A helical; Signal-anchor for type II membrane protein transmembrane segment spans residues 12–28; it reads TLIIICALFTLVTVLLW. The Lumenal segment spans residues 29–617; the sequence is NKCSSDKAIQ…YLKGSRAKHN (589 aa). Substrate-binding positions include Tyr-179, 184-186, Gln-201, Tyr-209, Gln-212, and Gln-215; that span reads RDR. Ca(2+) contacts are provided by Thr-237, Glu-239, Thr-268, Asn-269, and Asp-392. Residues 429 to 432, 499 to 500, Asn-510, Tyr-514, Tyr-560, Arg-563, and 572 to 581 contribute to the substrate site; these read KLGE, EY, and NLARWDYHTT.

The protein belongs to the D-glucuronyl C5-epimerase family. As to quaternary structure, homodimer. Interacts with HS2ST1.

It is found in the golgi apparatus membrane. It carries out the reaction [heparosan-N-sulfate](n) = [heparan-N-sulfate](n). The protein operates within glycan metabolism; heparan sulfate biosynthesis. It participates in glycan metabolism; heparin biosynthesis. Its function is as follows. Converts D-glucuronic acid residues adjacent to N-sulfate sugar residues to L-iduronic acid residues, both in maturing heparan sulfate (HS) and heparin chains. This is important for further modifications that determine the specificity of interactions between these glycosaminoglycans and proteins. This is D-glucuronyl C5-epimerase (GLCE) from Bos taurus (Bovine).